The primary structure comprises 705 residues: Translation initiation factor IF-2 (705 aa).

The interval 40-124 is disordered; sequence DDQIKALDKK…QPAAPKEIPS (85 aa). A compositionally biased stretch (basic and acidic residues) spans 41 to 58; sequence DQIKALDKKFKKEQKNDN. The span at 59–77 shows a compositional bias: low complexity; sequence KQSTQNNHQKSNNQNQNKG. The segment covering 94–108 has biased composition (basic residues); it reads KGNKKNNRNNKKNNK. Positions 207-376 constitute a tr-type G domain; that stretch reads ERPAVVTIMG…GLVAEVQELK (170 aa). The interval 216–223 is G1; sequence GHVDHGKT. Residue 216 to 223 coordinates GTP; the sequence is GHVDHGKT. Positions 241–245 are G2; sequence GITQH. The segment at 262–265 is G3; the sequence is DTPG. GTP is bound by residues 262-266 and 316-319; these read DTPGH and NKID. The tract at residues 316-319 is G4; sequence NKID. The G5 stretch occupies residues 352-354; it reads SAL.

It belongs to the TRAFAC class translation factor GTPase superfamily. Classic translation factor GTPase family. IF-2 subfamily.

Its subcellular location is the cytoplasm. Functionally, one of the essential components for the initiation of protein synthesis. Protects formylmethionyl-tRNA from spontaneous hydrolysis and promotes its binding to the 30S ribosomal subunits. Also involved in the hydrolysis of GTP during the formation of the 70S ribosomal complex. The protein is Translation initiation factor IF-2 of Staphylococcus aureus (strain MRSA252).